The chain runs to 176 residues: Ribosome maturation factor RimM (176 aa).

A PRC barrel domain is found at 93–172 (EGEFFYFDVL…EILTKDAKSI (80 aa)).

Belongs to the RimM family. In terms of assembly, binds ribosomal protein uS19.

The protein resides in the cytoplasm. Functionally, an accessory protein needed during the final step in the assembly of 30S ribosomal subunit, possibly for assembly of the head region. Essential for efficient processing of 16S rRNA. May be needed both before and after RbfA during the maturation of 16S rRNA. It has affinity for free ribosomal 30S subunits but not for 70S ribosomes. This Campylobacter curvus (strain 525.92) protein is Ribosome maturation factor RimM.